An 802-amino-acid chain; its full sequence is Homeobox-leucine zipper protein ANTHOCYANINLESS 2 (802 aa).

Residues 71–143 form a disordered region; the sequence is QPERGTNRGE…RKKRYHRHTP (73 aa). Basic and acidic residues predominate over residues 103–113; the sequence is RSREEEHESRS. A compositionally biased stretch (basic residues) spans 133–142; the sequence is PRKKRYHRHT. The homeobox DNA-binding region spans 134–193; sequence RKKRYHRHTPQQIQELESMFKECPHPDEKQRLELSKRLCLETRQVKFWFQNRRTQMKTQL. Positions 182 to 221 form a coiled coil; sequence FQNRRTQMKTQLERHENALLRQENDKLRAENMSIREAMRN. The region spanning 315 to 546 is the START domain; the sequence is GIDQKSVLLE…LQRQCECLAI (232 aa).

Belongs to the HD-ZIP homeobox family. Class IV subfamily. In terms of assembly, interacts with AIL7/PLT7, ANT, BBM and AIL1. Expressed in roots, stems, leaves and floral buds.

It is found in the nucleus. Probable transcription factor involved in the regulation of the tissue-specific accumulation of anthocyanins and in cellular organization of the primary root. This Arabidopsis thaliana (Mouse-ear cress) protein is Homeobox-leucine zipper protein ANTHOCYANINLESS 2.